Consider the following 327-residue polypeptide: Glycerol-3-phosphate dehydrogenase [NAD(P)+] (327 aa).

NADPH contacts are provided by tryptophan 11, histidine 30, and lysine 103. Residues lysine 103, glycine 131, and serine 133 each coordinate sn-glycerol 3-phosphate. Position 135 (alanine 135) interacts with NADPH. Sn-glycerol 3-phosphate contacts are provided by lysine 186, aspartate 243, serine 253, arginine 254, and asparagine 255. The active-site Proton acceptor is the lysine 186. Residue arginine 254 coordinates NADPH. Valine 281 and glutamate 283 together coordinate NADPH.

This sequence belongs to the NAD-dependent glycerol-3-phosphate dehydrogenase family.

Its subcellular location is the cytoplasm. It carries out the reaction sn-glycerol 3-phosphate + NAD(+) = dihydroxyacetone phosphate + NADH + H(+). The catalysed reaction is sn-glycerol 3-phosphate + NADP(+) = dihydroxyacetone phosphate + NADPH + H(+). The protein operates within membrane lipid metabolism; glycerophospholipid metabolism. Its function is as follows. Catalyzes the reduction of the glycolytic intermediate dihydroxyacetone phosphate (DHAP) to sn-glycerol 3-phosphate (G3P), the key precursor for phospholipid synthesis. This chain is Glycerol-3-phosphate dehydrogenase [NAD(P)+], found in Wolbachia sp. subsp. Brugia malayi (strain TRS).